The sequence spans 348 residues: Dihydroorotase (348 aa).

Zn(2+) is bound by residues histidine 14 and histidine 16. Residues 16–18 and asparagine 42 contribute to the substrate site; that span reads HLR. Residues lysine 100, histidine 137, and histidine 175 each contribute to the Zn(2+) site. N6-carboxylysine is present on lysine 100. Residue histidine 137 participates in substrate binding. Leucine 220 provides a ligand contact to substrate. Zn(2+) is bound at residue aspartate 248. Residue aspartate 248 is part of the active site. Residues histidine 252 and alanine 264 each coordinate substrate.

This sequence belongs to the metallo-dependent hydrolases superfamily. DHOase family. Class II DHOase subfamily. In terms of assembly, homodimer. Requires Zn(2+) as cofactor.

It carries out the reaction (S)-dihydroorotate + H2O = N-carbamoyl-L-aspartate + H(+). It participates in pyrimidine metabolism; UMP biosynthesis via de novo pathway; (S)-dihydroorotate from bicarbonate: step 3/3. Catalyzes the reversible cyclization of carbamoyl aspartate to dihydroorotate. The chain is Dihydroorotase from Synechococcus sp. (strain CC9605).